The following is a 1381-amino-acid chain: Hepatocyte growth factor receptor (1381 aa).

The signal sequence occupies residues 1-24 (MKAPAVLTPGILLLLFTLVQKSNG). The Extracellular segment spans residues 25–932 (ECKEALTKSE…VIVQPDQNFT (908 aa)). Residues 27–515 (KEALTKSEMN…TGKKITKIPL (489 aa)) enclose the Sema domain. N-linked (GlcNAc...) asparagine glycosylation is present at asparagine 45. Cystine bridges form between cysteine 95–cysteine 101, cysteine 98–cysteine 160, cysteine 133–cysteine 141, and cysteine 172–cysteine 175. The N-linked (GlcNAc...) asparagine glycan is linked to asparagine 106. Residue asparagine 149 is glycosylated (N-linked (GlcNAc...) asparagine). The N-linked (GlcNAc...) asparagine glycan is linked to asparagine 202. Disulfide bonds link cysteine 298–cysteine 363 and cysteine 385–cysteine 397. Asparagine 399 carries an N-linked (GlcNAc...) asparagine glycan. Disulfide bonds link cysteine 520–cysteine 538, cysteine 526–cysteine 561, cysteine 529–cysteine 545, and cysteine 541–cysteine 551. IPT/TIG domains follow at residues 563–655 (PTIY…FSYV), 657–739 (PIIT…FSYR), and 742–836 (PIVY…LIYV). Threonine 582 carries O-linked (Man) threonine glycosylation. Residues asparagine 607 and asparagine 635 are each glycosylated (N-linked (GlcNAc...) asparagine). 2 O-linked (Man) threonine glycosylation sites follow: threonine 676 and threonine 761. 3 N-linked (GlcNAc...) asparagine glycosylation sites follow: asparagine 785, asparagine 879, and asparagine 930. A helical membrane pass occupies residues 933 to 955 (GLIAGVVSISIALLLLLGLFLWL). Topologically, residues 956–1381 (KKRKQIKDLG…QDNADGELDT (426 aa)) are cytoplasmic. At serine 966 the chain carries Phosphoserine. At threonine 977 the chain carries Phosphothreonine. Phosphoserine occurs at positions 990, 997, and 1000. Position 1003 is a phosphotyrosine (tyrosine 1003). Residues 1078 to 1345 (VHFNEVIGRG…RISAIFSTFI (268 aa)) form the Protein kinase domain. ATP contacts are provided by residues 1084 to 1092 (IGRGHFGCV) and lysine 1110. The active-site Proton acceptor is aspartate 1204. The tract at residues 1212–1381 (LDEKFTVKVA…QDNADGELDT (170 aa)) is interaction with RANBP9. Tyrosine 1230 is subject to Phosphotyrosine. Residues tyrosine 1234 and tyrosine 1235 each carry the phosphotyrosine; by autocatalysis modification. Residue threonine 1289 is modified to Phosphothreonine. The interaction with MUC20 stretch occupies residues 1320-1359 (WHPKAEMRPSFSELVSRISAIFSTFIGEHYVHVNATYVNV). Tyrosine 1349 and tyrosine 1356 each carry phosphotyrosine; by autocatalysis. Residue tyrosine 1365 is modified to Phosphotyrosine.

The protein belongs to the protein kinase superfamily. Tyr protein kinase family. In terms of assembly, heterodimer made of an alpha chain (50 kDa) and a beta chain (145 kDa) which are disulfide linked. Binds PLXNB1. Interacts when phosphorylated with downstream effectors including STAT3, PIK3R1, SRC, PCLG1, GRB2 and GAB1. Interacts with SPSB1, SPSB2 and SPSB4. Interacts with INPP5D/SHIP1. When phosphorylated at Tyr-1356, interacts with INPPL1/SHIP2. Interacts with RANBP9 and RANBP10, as well as SPSB1, SPSB2, SPSB3 and SPSB4. SPSB1 binding occurs in the presence and in the absence of HGF, however HGF treatment has a positive effect on this interaction. Interacts with MUC20; prevents interaction with GRB2 and suppresses hepatocyte growth factor-induced cell proliferation. Interacts with GRB10. Interacts with PTPN1 and PTPN2. Interacts with HSP90AA1 and HSP90AB1; the interaction suppresses MET kinase activity. Interacts with tensin TNS3. Interacts (when phosphorylated) with tensin TNS4 (via SH2 domain); the interaction increases MET protein stability by inhibiting MET endocytosis and subsequent lysosomal degradation. In terms of processing, autophosphorylated in response to ligand binding on Tyr-1234 and Tyr-1235 in the kinase domain leading to further phosphorylation of Tyr-1349 and Tyr-1356 in the C-terminal multifunctional docking site. Dephosphorylated by PTPRJ at Tyr-1349 and Tyr-1365. Dephosphorylated by PTPN1 and PTPN2. Ubiquitinated. Ubiquitination by CBL regulates the receptor stability and activity through proteasomal degradation. Post-translationally, O-mannosylation of IPT/TIG domains by TMEM260 is required for protein maturation. O-mannosylated residues are composed of single mannose glycans that are not elongated or modified.

The protein resides in the membrane. It catalyses the reaction L-tyrosyl-[protein] + ATP = O-phospho-L-tyrosyl-[protein] + ADP + H(+). In its inactive state, the C-terminal tail interacts with the catalytic domain and inhibits the kinase activity. Upon ligand binding, the C-terminal tail is displaced and becomes phosphorylated, thus increasing the kinase activity. Its function is as follows. Receptor tyrosine kinase that transduces signals from the extracellular matrix into the cytoplasm by binding to hepatocyte growth factor/HGF ligand. Regulates many physiological processes including proliferation, scattering, morphogenesis and survival. Ligand binding at the cell surface induces autophosphorylation of MET on its intracellular domain that provides docking sites for downstream signaling molecules. Following activation by ligand, interacts with the PI3-kinase subunit PIK3R1, PLCG1, SRC, GRB2, STAT3 or the adapter GAB1. Recruitment of these downstream effectors by MET leads to the activation of several signaling cascades including the RAS-ERK, PI3 kinase-AKT, or PLCgamma-PKC. The RAS-ERK activation is associated with the morphogenetic effects while PI3K/AKT coordinates prosurvival effects. During embryonic development, MET signaling plays a role in gastrulation, development and migration of muscles and neuronal precursors, angiogenesis and kidney formation. In adults, participates in wound healing as well as organ regeneration and tissue remodeling. Also promotes differentiation and proliferation of hematopoietic cells. In Saimiri boliviensis boliviensis (Bolivian squirrel monkey), this protein is Hepatocyte growth factor receptor (MET).